The following is a 273-amino-acid chain: HTH-type transcriptional activator RhaS (273 aa).

Positions 174-272 constitute an HTH araC/xylS-type domain; the sequence is YQLLDWLQNN…SQSPRDLRSQ (99 aa). DNA-binding regions (H-T-H motif) lie at residues 191-212 and 239-262; these read PELA…KNKT and VTDI…KREF.

In terms of assembly, binds DNA as a dimer.

It is found in the cytoplasm. Its function is as follows. Activates expression of the rhaBAD and rhaT operons. The sequence is that of HTH-type transcriptional activator RhaS from Yersinia pseudotuberculosis serotype I (strain IP32953).